We begin with the raw amino-acid sequence, 218 residues long: Glutathione S-transferase D7 (218 aa).

A GST N-terminal domain is found at 1 to 82 (MTPVLYYLPP…YLVSAYGKDE (82 aa)). Residues serine 11, 52–54 (HCI), and 66–68 (ESR) each bind glutathione. The region spanning 88-207 (DFRSRAIVDQ…KEINETGAET (120 aa)) is the GST C-terminal domain.

The protein belongs to the GST superfamily. Theta family. As to quaternary structure, homodimer.

The catalysed reaction is RX + glutathione = an S-substituted glutathione + a halide anion + H(+). In terms of biological role, conjugation of reduced glutathione to a wide number of exogenous and endogenous hydrophobic electrophiles. The protein is Glutathione S-transferase D7 of Anopheles gambiae (African malaria mosquito).